The following is a 119-amino-acid chain: Fluoride-specific ion channel FluC 2 (119 aa).

Helical transmembrane passes span 1–21 (MIFAVGFGASLGAVARYALTS) and 44–64 (GAFFLGLAFALRLPASVYAFL). Residues G70 and T73 each contribute to the Na(+) site. Residues 98-118 (LLASYLGGAVLLTCGYYLGSL) traverse the membrane as a helical segment.

The protein belongs to the fluoride channel Fluc/FEX (TC 1.A.43) family.

It localises to the cell membrane. The enzyme catalyses fluoride(in) = fluoride(out). Its activity is regulated as follows. Na(+) is not transported, but it plays an essential structural role and its presence is essential for fluoride channel function. Functionally, fluoride-specific ion channel. Important for reducing fluoride concentration in the cell, thus reducing its toxicity. The sequence is that of Fluoride-specific ion channel FluC 2 from Lactobacillus delbrueckii subsp. bulgaricus (strain ATCC 11842 / DSM 20081 / BCRC 10696 / JCM 1002 / NBRC 13953 / NCIMB 11778 / NCTC 12712 / WDCM 00102 / Lb 14).